Consider the following 590-residue polypeptide: Enhancer of polycomb-like protein 1 (590 aa).

Disordered regions lie at residues 302–335 and 471–497; these read DEDL…PVRS and TPPR…EPPV. Residues 475–488 are compositionally biased toward basic and acidic residues; the sequence is ELGEDRSDRWKYDS.

This sequence belongs to the enhancer of polycomb family. In terms of assembly, component of the NuA4 histone acetyltransferase complex.

It is found in the nucleus. Component of the NuA4 histone acetyltransferase complex which is involved in transcriptional activation of selected genes principally by acetylation of nucleosomal histone H4 and H2A. The NuA4 complex is also involved in DNA repair. Involved in gene silencing by neighboring heterochromatin, blockage of the silencing spreading along the chromosome, and required for cell cycle progression through G2/M. This is Enhancer of polycomb-like protein 1 (EPL1) from Gibberella zeae (strain ATCC MYA-4620 / CBS 123657 / FGSC 9075 / NRRL 31084 / PH-1) (Wheat head blight fungus).